The primary structure comprises 435 residues: 5-methylthioadenosine/S-adenosylhomocysteine deaminase (435 aa).

Residues histidine 65 and histidine 67 each coordinate Zn(2+). Substrate is bound by residues glutamate 94, arginine 150, and histidine 189. Histidine 216 provides a ligand contact to Zn(2+). Residues glutamate 219 and aspartate 304 each contribute to the substrate site. Aspartate 304 provides a ligand contact to Zn(2+).

It belongs to the metallo-dependent hydrolases superfamily. MTA/SAH deaminase family. The cofactor is Zn(2+).

The enzyme catalyses S-adenosyl-L-homocysteine + H2O + H(+) = S-inosyl-L-homocysteine + NH4(+). The catalysed reaction is S-methyl-5'-thioadenosine + H2O + H(+) = S-methyl-5'-thioinosine + NH4(+). Catalyzes the deamination of 5-methylthioadenosine and S-adenosyl-L-homocysteine into 5-methylthioinosine and S-inosyl-L-homocysteine, respectively. Is also able to deaminate adenosine. This is 5-methylthioadenosine/S-adenosylhomocysteine deaminase from Bacillus cereus (strain ATCC 10987 / NRS 248).